We begin with the raw amino-acid sequence, 147 residues long: Protein-export protein SecB (147 aa).

It belongs to the SecB family. As to quaternary structure, homotetramer, a dimer of dimers. One homotetramer interacts with 1 SecA dimer.

Its subcellular location is the cytoplasm. Its function is as follows. One of the proteins required for the normal export of preproteins out of the cell cytoplasm. It is a molecular chaperone that binds to a subset of precursor proteins, maintaining them in a translocation-competent state. It also specifically binds to its receptor SecA. This is Protein-export protein SecB from Neisseria gonorrhoeae (strain ATCC 700825 / FA 1090).